The chain runs to 339 residues: Phenylalanine--tRNA ligase alpha subunit (339 aa).

Position 254 (Glu-254) interacts with Mg(2+).

It belongs to the class-II aminoacyl-tRNA synthetase family. Phe-tRNA synthetase alpha subunit type 1 subfamily. In terms of assembly, tetramer of two alpha and two beta subunits. It depends on Mg(2+) as a cofactor.

The protein resides in the cytoplasm. It carries out the reaction tRNA(Phe) + L-phenylalanine + ATP = L-phenylalanyl-tRNA(Phe) + AMP + diphosphate + H(+). This Clostridium tetani (strain Massachusetts / E88) protein is Phenylalanine--tRNA ligase alpha subunit.